A 466-amino-acid polypeptide reads, in one-letter code: Soluble pyridine nucleotide transhydrogenase (466 aa).

Position 36 to 45 (36 to 45 (ERYQNVGGGC)) interacts with FAD.

The protein belongs to the class-I pyridine nucleotide-disulfide oxidoreductase family. FAD serves as cofactor.

It localises to the cytoplasm. It catalyses the reaction NAD(+) + NADPH = NADH + NADP(+). Its function is as follows. Conversion of NADPH, generated by peripheral catabolic pathways, to NADH, which can enter the respiratory chain for energy generation. The sequence is that of Soluble pyridine nucleotide transhydrogenase from Escherichia fergusonii (strain ATCC 35469 / DSM 13698 / CCUG 18766 / IAM 14443 / JCM 21226 / LMG 7866 / NBRC 102419 / NCTC 12128 / CDC 0568-73).